A 219-amino-acid polypeptide reads, in one-letter code: Exosomal polycystin-1-interacting protein (219 aa).

The first 19 residues, 1–19, serve as a signal peptide directing secretion; the sequence is MAPPSRHCLLLISTLGVFA. N-linked (GlcNAc...) asparagine glycosylation is found at asparagine 29, asparagine 42, asparagine 95, asparagine 188, and asparagine 210.

It belongs to the EPCIP family. Homooligomer. Interacts with PKD1 (via the PKD repeats in the N-terminal extracellular region); the interaction is not dependent on N-glycosylation of either protein. N-glycosylated. As to expression, detected in the kidney and in the endothelium of large blood vessels (at protein level).

It is found in the vesicle. Its subcellular location is the secreted. The protein localises to the extracellular exosome. In terms of biological role, likely to be involved with PKD1 in the detection, sequestration and exocytosis of senescent mitochondria. This is Exosomal polycystin-1-interacting protein from Homo sapiens (Human).